The sequence spans 83 residues: Evasin P1090 (83 aa).

The first 24 residues, 1-24 (MEVKIFAFLQIAVLIAFSLHLASA), serve as a signal peptide directing secretion. Disulfide bonds link C44-C63, C48-C65, and C59-C76. N-linked (GlcNAc...) asparagine glycosylation is present at N47. N-linked (GlcNAc...) asparagine glycosylation is present at N70.

The protein localises to the secreted. Functionally, salivary chemokine-binding protein which binds to host chemokines CXCL1, CXCL2, CXCL3, CXCL5, CXCL6, CXCL10, CXCL11 and CXCL13. This is Evasin P1090 from Ixodes ricinus (Common tick).